Consider the following 374-residue polypeptide: Putative glutamate--cysteine ligase 2-2 (374 aa).

The protein belongs to the glutamate--cysteine ligase type 2 family. YbdK subfamily.

The enzyme catalyses L-cysteine + L-glutamate + ATP = gamma-L-glutamyl-L-cysteine + ADP + phosphate + H(+). ATP-dependent carboxylate-amine ligase which exhibits weak glutamate--cysteine ligase activity. The protein is Putative glutamate--cysteine ligase 2-2 of Rhodococcus jostii (strain RHA1).